A 337-amino-acid polypeptide reads, in one-letter code: Adenylosuccinate synthetase (337 aa).

Residues 12-18 (GDEGKGK) and 42-44 (GHT) contribute to the GTP site. Asp13 (proton acceptor) is an active-site residue. Mg(2+)-binding residues include Asp13 and Gly42. IMP is bound by residues 13–16 (DEGK), 40–43 (NAGH), Thr127, Arg141, Gln179, Thr194, and Arg256. The active-site Proton donor is the His43. 252 to 258 (TVTGRRR) is a substrate binding site. GTP contacts are provided by residues Arg258, 284-286 (CLD), and 324-326 (STG).

The protein belongs to the adenylosuccinate synthetase family. As to quaternary structure, homodimer. Mg(2+) is required as a cofactor.

The protein resides in the cytoplasm. It carries out the reaction IMP + L-aspartate + GTP = N(6)-(1,2-dicarboxyethyl)-AMP + GDP + phosphate + 2 H(+). It functions in the pathway purine metabolism; AMP biosynthesis via de novo pathway; AMP from IMP: step 1/2. Functionally, plays an important role in the de novo pathway of purine nucleotide biosynthesis. Catalyzes the first committed step in the biosynthesis of AMP from IMP. The sequence is that of Adenylosuccinate synthetase from Methanococcus maripaludis (strain C5 / ATCC BAA-1333).